Consider the following 110-residue polypeptide: U1-lycotoxin-Ls1mm (110 aa).

A signal peptide spans Met-1–Ala-20. The propeptide occupies Glu-21–Arg-44. 4 disulfide bridges follow: Cys-47-Cys-62, Cys-54-Cys-71, Cys-61-Cys-89, and Cys-73-Cys-87.

Belongs to the neurotoxin 19 (CSTX) family. 03 subfamily. As to expression, expressed by the venom gland.

It is found in the secreted. The polypeptide is U1-lycotoxin-Ls1mm (Lycosa singoriensis (Wolf spider)).